The primary structure comprises 260 residues: MFDIGVNLTSTQFASDREKVISRAREAGVTGMLITGTNALESQQAQKLAEAHQDYCWSTAGVHPHHASEWSADVANTLRRLAEKKDVVAIGECGLDFNRNLSAHQQQEYAFDAQLALAAELNMPVFLHCREAHERFAAVLEPWLPKLPAAVIHCFTGTREELTACLDMGLSVGITGWVCDERRGIALREMLPLIPAERLLLETDAPYLLPRDMRPRPTSRRNEPCFLPHILQQVANWRGENVEMLARQVDHNARKLFGLI.

The a divalent metal cation site is built by Glu92, His128, and His153.

The protein belongs to the metallo-dependent hydrolases superfamily. TatD-type hydrolase family. TatD subfamily. As to quaternary structure, monomer. The cofactor is Mg(2+).

It localises to the cytoplasm. In terms of biological role, 3'-5' exonuclease that prefers single-stranded DNA and RNA. May play a role in the H(2)O(2)-induced DNA damage repair. This Pantoea ananatis (strain LMG 20103) protein is 3'-5' ssDNA/RNA exonuclease TatD.